Consider the following 496-residue polypeptide: Probable fatty acyl-CoA reductase 5 (496 aa).

The protein belongs to the fatty acyl-CoA reductase family. In terms of tissue distribution, expressed in the endodermal cell layer surrounding the central vasculature in roots. Expressed in floral organs of very young unopened buds and receptacle of siliques.

It carries out the reaction a long-chain fatty acyl-CoA + 2 NADPH + 2 H(+) = a long-chain primary fatty alcohol + 2 NADP(+) + CoA. Catalyzes the reduction of fatty acyl-CoA to fatty alcohols. Catalyzes specifically the formation of C18:0 fatty alcohol. Provides the fatty alcohols required for synthesis of suberin in roots, seed coat and wound-induced leaf tissue. Provides the fatty alcohols required for synthesis of alkyl hydroxycinnamates in root waxes. The chain is Probable fatty acyl-CoA reductase 5 from Arabidopsis thaliana (Mouse-ear cress).